Consider the following 124-residue polypeptide: Small ribosomal subunit protein uS13 (124 aa).

The segment at arginine 94 to arginine 124 is disordered.

The protein belongs to the universal ribosomal protein uS13 family. Part of the 30S ribosomal subunit. Forms a loose heterodimer with protein S19. Forms two bridges to the 50S subunit in the 70S ribosome.

In terms of biological role, located at the top of the head of the 30S subunit, it contacts several helices of the 16S rRNA. In the 70S ribosome it contacts the 23S rRNA (bridge B1a) and protein L5 of the 50S subunit (bridge B1b), connecting the 2 subunits; these bridges are implicated in subunit movement. Contacts the tRNAs in the A and P-sites. The polypeptide is Small ribosomal subunit protein uS13 (Mycolicibacterium vanbaalenii (strain DSM 7251 / JCM 13017 / BCRC 16820 / KCTC 9966 / NRRL B-24157 / PYR-1) (Mycobacterium vanbaalenii)).